Here is a 108-residue protein sequence, read N- to C-terminus: Iron-sulfur cluster assembly protein CyaY (108 aa).

This sequence belongs to the frataxin family.

Its function is as follows. Involved in iron-sulfur (Fe-S) cluster assembly. May act as a regulator of Fe-S biogenesis. In Burkholderia cenocepacia (strain ATCC BAA-245 / DSM 16553 / LMG 16656 / NCTC 13227 / J2315 / CF5610) (Burkholderia cepacia (strain J2315)), this protein is Iron-sulfur cluster assembly protein CyaY.